The sequence spans 279 residues: Probable phosphatase phospho1 (279 aa).

D41 functions as the Nucleophile in the catalytic mechanism. Residues D41 and D43 each contribute to the Mg(2+) site. D43 serves as the catalytic Proton donor. D52 and D133 together coordinate substrate. D215 contacts Mg(2+).

This sequence belongs to the HAD-like hydrolase superfamily. PHOSPHO family. The cofactor is Mg(2+).

Its subcellular location is the extracellular vesicle. The enzyme catalyses phosphoethanolamine + H2O = ethanolamine + phosphate. It carries out the reaction phosphocholine + H2O = choline + phosphate. Phosphatase that has a high activity toward phosphoethanolamine (PEA) and phosphocholine (PCho). Involved in the generation of inorganic phosphate for bone mineralization. This is Probable phosphatase phospho1 (phospho1) from Danio rerio (Zebrafish).